Consider the following 291-residue polypeptide: uncharacterized protein (291 aa).

Residues 191 to 289 enclose the HTH araC/xylS-type domain; it reads KQMLNWIHLH…NMTPLSYKKM (99 aa). DNA-binding regions (H-T-H motif) lie at residues 208 to 229 and 256 to 279; these read EDIA…KRML and VTEV…QQAM.

This is an uncharacterized protein from Bacillus subtilis (strain 168).